The sequence spans 409 residues: uncharacterized protein (409 aa).

Transmembrane regions (helical) follow at residues 62 to 82 (FSLG…WVWI), 100 to 120 (LLLF…PEAF), 123 to 143 (MGLL…LFAL), 152 to 172 (ASFM…TFWI), 183 to 203 (VVLW…RYWV), 252 to 272 (GTPW…WIYF), 293 to 313 (AQYL…FTAV), 328 to 348 (YNFA…TMWM), 355 to 375 (VLPY…TLVP), and 376 to 396 (FVAN…VAVW).

It localises to the cell membrane. This is an uncharacterized protein from Rhizobium meliloti (strain 1021) (Ensifer meliloti).